A 383-amino-acid chain; its full sequence is Subtelomeric hrmA-associated cluster protein AFUB_078970 (383 aa).

2 disordered regions span residues 118–145 (NPVSEVPESPPSTVKSSGDASVSDKDDD) and 249–318 (QATQ…SARP). Low complexity predominate over residues 119–134 (PVSEVPESPPSTVKSS). In terms of domain architecture, Myb-like spans 318–364 (PYSAAEDDILQTLVARGLAWEEIEKEFGLRFAKRTMRSLQMRWSRKL).

In terms of biological role, myb-like domain-containing protein; part of the subtelomeric hrmA-associated cluster (HAC) containing genes that alter the hyphal surface (such as reduced total chitin or increased beta-glucan exposure) and perturb inter-hyphal interactions within the developing biofilms, resulting in a loss of vertically aligned polarized growing filaments. Consequently, this hypoxia-typic morphotype (called H-MORPH) with altered biofilm architecture leads to increased hypoxia fitness, increased host inflammation, rapid disease progression, and mortality in a murine model of invasive aspergillosis. The sequence is that of Subtelomeric hrmA-associated cluster protein AFUB_078970 from Aspergillus fumigatus (strain CBS 144.89 / FGSC A1163 / CEA10) (Neosartorya fumigata).